A 257-amino-acid chain; its full sequence is Triosephosphate isomerase, cytosolic (257 aa).

Residues Asn-10 and Lys-12 each coordinate substrate. His-96 serves as the catalytic Electrophile. The active-site Proton acceptor is the Glu-167.

This sequence belongs to the triosephosphate isomerase family. As to quaternary structure, homodimer. As to expression, higher levels found in leaves than in roots.

The protein localises to the cytoplasm. The enzyme catalyses D-glyceraldehyde 3-phosphate = dihydroxyacetone phosphate. It participates in carbohydrate biosynthesis; gluconeogenesis. The protein operates within carbohydrate degradation; glycolysis; D-glyceraldehyde 3-phosphate from glycerone phosphate: step 1/1. The polypeptide is Triosephosphate isomerase, cytosolic (TPI) (Stellaria longipes (Longstalk starwort)).